The primary structure comprises 266 residues: 14-3-3 protein homolog (266 aa).

A disordered region spans residues 154 to 177 (KQAADQAQESYQKATETAEGHSPA). Positions 158-168 (DQAQESYQKAT) are enriched in polar residues.

This sequence belongs to the 14-3-3 family.

In Neospora caninum (Coccidian parasite), this protein is 14-3-3 protein homolog.